The chain runs to 132 residues: Telomere bouquet protein 1 (132 aa).

Interacts with bqt2 and sad1. The bqt1-bqt2-sad1 complex binds rap1.

It is found in the cytoplasm. It localises to the cytoskeleton. The protein localises to the microtubule organizing center. Its subcellular location is the spindle pole body. The protein resides in the chromosome. It is found in the telomere. Involved in chromosome segregation. During meiotic prophase, connects telomeres to the spindle pole body by forming a bridge between the telomere protein rap1 and the spindle pole body protein sad1. The sequence is that of Telomere bouquet protein 1 (bqt1) from Schizosaccharomyces pombe (strain 972 / ATCC 24843) (Fission yeast).